A 267-amino-acid polypeptide reads, in one-letter code: Thiamine pyrophosphokinase 2 (267 aa).

Belongs to the thiamine pyrophosphokinase family.

Its subcellular location is the cytoplasm. The protein localises to the cytosol. The catalysed reaction is thiamine + ATP = thiamine diphosphate + AMP + H(+). Its pathway is cofactor biosynthesis; thiamine diphosphate biosynthesis; thiamine diphosphate from thiamine: step 1/1. Catalyzes the phosphorylation of thiamine to thiamine pyrophosphate (TPP). TPP is an active cofactor for enzymes involved in glycolysis and energy production. Plant leaves require high levels of TPP for photosynthesis and carbohydrate metabolism. This Oryza sativa subsp. japonica (Rice) protein is Thiamine pyrophosphokinase 2 (TPK2).